The chain runs to 132 residues: Small ribosomal subunit protein uS8 (132 aa).

Belongs to the universal ribosomal protein uS8 family. As to quaternary structure, part of the 30S ribosomal subunit. Contacts proteins S5 and S12.

One of the primary rRNA binding proteins, it binds directly to 16S rRNA central domain where it helps coordinate assembly of the platform of the 30S subunit. In Streptococcus pyogenes serotype M49 (strain NZ131), this protein is Small ribosomal subunit protein uS8.